We begin with the raw amino-acid sequence, 354 residues long: NADH-quinone oxidoreductase subunit H (354 aa).

The next 8 membrane-spanning stretches (helical) occupy residues Leu23–Trp43, Tyr91–Phe111, Leu124–Ala144, Ile162–Leu182, Ile203–Val223, Gly250–Met270, Ile291–Leu311, and Ile330–Trp350.

It belongs to the complex I subunit 1 family. As to quaternary structure, NDH-1 is composed of 14 different subunits. Subunits NuoA, H, J, K, L, M, N constitute the membrane sector of the complex.

The protein localises to the cell inner membrane. The enzyme catalyses a quinone + NADH + 5 H(+)(in) = a quinol + NAD(+) + 4 H(+)(out). NDH-1 shuttles electrons from NADH, via FMN and iron-sulfur (Fe-S) centers, to quinones in the respiratory chain. The immediate electron acceptor for the enzyme in this species is believed to be ubiquinone. Couples the redox reaction to proton translocation (for every two electrons transferred, four hydrogen ions are translocated across the cytoplasmic membrane), and thus conserves the redox energy in a proton gradient. This subunit may bind ubiquinone. The chain is NADH-quinone oxidoreductase subunit H from Ralstonia nicotianae (strain ATCC BAA-1114 / GMI1000) (Ralstonia solanacearum).